The sequence spans 134 residues: Orexigenic neuropeptide QRFP (134 aa).

The first 18 residues, 1–18, serve as a signal peptide directing secretion; it reads MRSPYSLPYLLFLPLGAC. Positions 19–88 are excised as a propeptide; it reads FPVLDTEEPV…RAGFQLRLGR (70 aa). Phenylalanine 131 bears the Phenylalanine amide mark.

It belongs to the RFamide neuropeptide family. Ligand for the G-protein coupled receptor QRFPR/GPR103. As to expression, expressed in the hypothalamus.

The protein localises to the secreted. Its function is as follows. Stimulates feeding behavior, metabolic rate and locomotor activity and increases blood pressure. May have orexigenic activity. May promote aldosterone secretion by the adrenal gland. The polypeptide is Orexigenic neuropeptide QRFP (Bos taurus (Bovine)).